Reading from the N-terminus, the 565-residue chain is Urease subunit beta (565 aa).

The region spanning 130–565 (GGIDTHIHFI…LALARKYFMI (436 aa)) is the Urease domain. Positions 135, 137, and 218 each coordinate Ni(2+). Lys218 is subject to N6-carboxylysine. His220 contributes to the substrate binding site. Ni(2+) contacts are provided by His247 and His273. His321 (proton donor) is an active-site residue. Asp361 is a Ni(2+) binding site.

It belongs to the metallo-dependent hydrolases superfamily. Urease alpha subunit family. As to quaternary structure, heterohexamer of 3 UreA (alpha) and 3 UreB (beta) subunits. It depends on Ni cation as a cofactor. Carboxylation allows a single lysine to coordinate two nickel ions.

The protein resides in the cytoplasm. It catalyses the reaction urea + 2 H2O + H(+) = hydrogencarbonate + 2 NH4(+). It participates in nitrogen metabolism; urea degradation; CO(2) and NH(3) from urea (urease route): step 1/1. The polypeptide is Urease subunit beta (Campylobacter lari).